Consider the following 201-residue polypeptide: dCTP deaminase, dUMP-forming (201 aa).

Residues 101–106, D119, 127–129, Q148, Y162, and Q174 each bind dCTP; these read KSSLGR and TLE. The Proton donor/acceptor role is filled by E129.

This sequence belongs to the dCTP deaminase family. In terms of assembly, homotrimer.

The enzyme catalyses dCTP + 2 H2O = dUMP + NH4(+) + diphosphate. The protein operates within pyrimidine metabolism; dUMP biosynthesis; dUMP from dCTP: step 1/1. Bifunctional enzyme that catalyzes both the deamination of dCTP to dUTP and the hydrolysis of dUTP to dUMP without releasing the toxic dUTP intermediate. This Clavibacter michiganensis subsp. michiganensis (strain NCPPB 382) protein is dCTP deaminase, dUMP-forming.